The sequence spans 394 residues: Phosphoglycerate kinase (394 aa).

Residues 21–23 (DFN), R36, 59–62 (HLGR), R118, and R151 contribute to the substrate site. Phosphoserine is present on S183. K201 is an ATP binding site. T299 is subject to Phosphothreonine. ATP contacts are provided by residues E323 and 350-353 (GGDS).

Belongs to the phosphoglycerate kinase family. In terms of assembly, monomer.

Its subcellular location is the cytoplasm. The enzyme catalyses (2R)-3-phosphoglycerate + ATP = (2R)-3-phospho-glyceroyl phosphate + ADP. The protein operates within carbohydrate degradation; glycolysis; pyruvate from D-glyceraldehyde 3-phosphate: step 2/5. This Shouchella clausii (strain KSM-K16) (Alkalihalobacillus clausii) protein is Phosphoglycerate kinase.